The primary structure comprises 240 residues: tRNA (guanine-N(7)-)-methyltransferase (240 aa).

Residues glutamate 71, glutamate 96, aspartate 123, and aspartate 146 each contribute to the S-adenosyl-L-methionine site. The active site involves aspartate 146. Substrate contacts are provided by residues lysine 150, aspartate 182, and 219 to 222 (TKFE).

It belongs to the class I-like SAM-binding methyltransferase superfamily. TrmB family.

It catalyses the reaction guanosine(46) in tRNA + S-adenosyl-L-methionine = N(7)-methylguanosine(46) in tRNA + S-adenosyl-L-homocysteine. It participates in tRNA modification; N(7)-methylguanine-tRNA biosynthesis. Its function is as follows. Catalyzes the formation of N(7)-methylguanine at position 46 (m7G46) in tRNA. The protein is tRNA (guanine-N(7)-)-methyltransferase of Hydrogenovibrio crunogenus (strain DSM 25203 / XCL-2) (Thiomicrospira crunogena).